We begin with the raw amino-acid sequence, 275 residues long: tRNA (guanine-N(1)-)-methyltransferase (275 aa).

S-adenosyl-L-methionine contacts are provided by residues Gly124 and 149 to 154; that span reads IGDYVL.

Belongs to the RNA methyltransferase TrmD family. In terms of assembly, homodimer.

The protein localises to the cytoplasm. The catalysed reaction is guanosine(37) in tRNA + S-adenosyl-L-methionine = N(1)-methylguanosine(37) in tRNA + S-adenosyl-L-homocysteine + H(+). Specifically methylates guanosine-37 in various tRNAs. This chain is tRNA (guanine-N(1)-)-methyltransferase, found in Bifidobacterium animalis subsp. lactis (strain AD011).